A 204-amino-acid chain; its full sequence is MIGHLTGRLVEKHPPEILLDVQGVGYELLLPMTSFYQLPDIGQQTALFTHLVVREDAHLLFGFSQKTDRTLFRELIKTNGVGPKLALAILSAMSVEEFAYAIEREELSKLVKIPGVGKKTAERLLVELKGKFKGIQQEDFFIESQHLKQPEHALNEQDIPASEAISALIALGYKAAEAEKLVKKISKPALSSEQLIREALKAAL.

A domain I region spans residues 1–64 (MIGHLTGRLV…EDAHLLFGFS (64 aa)). A domain II region spans residues 65 to 143 (QKTDRTLFRE…GIQQEDFFIE (79 aa)). The tract at residues 144 to 155 (SQHLKQPEHALN) is flexible linker. A domain III region spans residues 156–204 (EQDIPASEAISALIALGYKAAEAEKLVKKISKPALSSEQLIREALKAAL).

Belongs to the RuvA family. Homotetramer. Forms an RuvA(8)-RuvB(12)-Holliday junction (HJ) complex. HJ DNA is sandwiched between 2 RuvA tetramers; dsDNA enters through RuvA and exits via RuvB. An RuvB hexamer assembles on each DNA strand where it exits the tetramer. Each RuvB hexamer is contacted by two RuvA subunits (via domain III) on 2 adjacent RuvB subunits; this complex drives branch migration. In the full resolvosome a probable DNA-RuvA(4)-RuvB(12)-RuvC(2) complex forms which resolves the HJ.

The protein resides in the cytoplasm. The RuvA-RuvB-RuvC complex processes Holliday junction (HJ) DNA during genetic recombination and DNA repair, while the RuvA-RuvB complex plays an important role in the rescue of blocked DNA replication forks via replication fork reversal (RFR). RuvA specifically binds to HJ cruciform DNA, conferring on it an open structure. The RuvB hexamer acts as an ATP-dependent pump, pulling dsDNA into and through the RuvAB complex. HJ branch migration allows RuvC to scan DNA until it finds its consensus sequence, where it cleaves and resolves the cruciform DNA. In Pasteurella multocida (strain Pm70), this protein is Holliday junction branch migration complex subunit RuvA.